The primary structure comprises 240 residues: Uridylate kinase (240 aa).

An ATP-binding site is contributed by 14–17; the sequence is KLSG. A UMP-binding site is contributed by glycine 56. The ATP site is built by glycine 57 and arginine 61. UMP-binding positions include aspartate 76 and 137 to 144; that span reads TGNPFFTT. ATP-binding residues include threonine 164, tyrosine 170, and aspartate 173.

The protein belongs to the UMP kinase family. In terms of assembly, homohexamer.

It localises to the cytoplasm. It carries out the reaction UMP + ATP = UDP + ADP. It functions in the pathway pyrimidine metabolism; CTP biosynthesis via de novo pathway; UDP from UMP (UMPK route): step 1/1. Inhibited by UTP. In terms of biological role, catalyzes the reversible phosphorylation of UMP to UDP. The protein is Uridylate kinase of Verminephrobacter eiseniae (strain EF01-2).